The primary structure comprises 250 residues: Adenosylcobinamide-GDP ribazoletransferase (250 aa).

The next 6 helical transmembrane spans lie at 33-53 (IASY…LFYI), 63-83 (IVMT…HIDG), 109-129 (LGTN…LFLT), 137-157 (LTAL…SMMI), 180-200 (FAIA…LAVF), and 203-223 (ILTI…LRIG).

Belongs to the CobS family. Mg(2+) is required as a cofactor.

It is found in the cell membrane. It catalyses the reaction alpha-ribazole + adenosylcob(III)inamide-GDP = adenosylcob(III)alamin + GMP + H(+). The catalysed reaction is alpha-ribazole 5'-phosphate + adenosylcob(III)inamide-GDP = adenosylcob(III)alamin 5'-phosphate + GMP + H(+). It functions in the pathway cofactor biosynthesis; adenosylcobalamin biosynthesis; adenosylcobalamin from cob(II)yrinate a,c-diamide: step 7/7. Joins adenosylcobinamide-GDP and alpha-ribazole to generate adenosylcobalamin (Ado-cobalamin). Also synthesizes adenosylcobalamin 5'-phosphate from adenosylcobinamide-GDP and alpha-ribazole 5'-phosphate. The chain is Adenosylcobinamide-GDP ribazoletransferase from Thermoanaerobacter sp. (strain X514).